A 605-amino-acid polypeptide reads, in one-letter code: Protein Spindly (605 aa).

An N-acetylmethionine modification is found at M1. Residues 2 to 442 adopt a coiled-coil conformation; the sequence is EADIITNLRC…ELKLKYEPEE (441 aa). Phosphoserine occurs at positions 513, 515, and 555. The disordered stretch occupies residues 544 to 580; sequence ALSERSGNTPNSPRLAAESKLQTEVKEGKETSSKLEK. Residues 564–580 show a composition bias toward basic and acidic residues; that stretch reads LQTEVKEGKETSSKLEK.

It belongs to the Spindly family. In terms of assembly, interacts with KNTC1 and ZW10. These interactions appear weak and may be transient or indirect. Interacts with dynein intermediate chain and dynactin (DCTN1). Interacts with the catalytically active form of USP45. Post-translationally, monoubiquitinated with'Lys-48' linkage. Deubiquitinated by USP45.

The protein localises to the cytoplasm. It is found in the cytoskeleton. It localises to the microtubule organizing center. Its subcellular location is the centrosome. The protein resides in the chromosome. The protein localises to the centromere. It is found in the kinetochore. It localises to the nucleus. Its subcellular location is the spindle pole. In terms of biological role, required for the localization of dynein and dynactin to the mitotic kintochore. Dynein is believed to control the initial lateral interaction between the kinetochore and spindle microtubules and to facilitate the subsequent formation of end-on kinetochore-microtubule attachments mediated by the NDC80 complex. Also required for correct spindle orientation. Does not appear to be required for the removal of spindle assembly checkpoint (SAC) proteins from the kinetochore upon bipolar spindle attachment. Acts as an adapter protein linking the dynein motor complex to various cargos and converts dynein from a non-processive to a highly processive motor in the presence of dynactin. Facilitates the interaction between dynein and dynactin and activates dynein processivity (the ability to move along a microtubule for a long distance without falling off the track). Plays a role in cell migration. The protein is Protein Spindly of Homo sapiens (Human).